The chain runs to 245 residues: uncharacterized protein (245 aa).

Residues 1-27 (MKLKKRVSMFLVALTMCGGLFVTPAKA) form the signal peptide.

This is an uncharacterized protein from Bacillus subtilis (strain 168).